The primary structure comprises 257 residues: Gamma-secretase subunit APH-1B (257 aa).

The next 7 membrane-spanning stretches (helical) occupy residues 5–25 (VFFGCAFIAFGPALALYVFTI), 32–52 (IIFLIAGAFFWLVSLLISSLV), 70–90 (YLLIFGTFVSVYIQEMFRFAY), 115–135 (LLAYVSGLGFGIMSGVFSFVN), 158–178 (YSAFMTLVIILLHVFWGIVFF), 186–206 (WGILLIVLLTHLLVSAQTFIS), and 213–233 (LASAFIILVLMGTWAFLAAGG).

The protein belongs to the APH-1 family. In terms of assembly, probable component of the gamma-secretase complex, a complex composed of a presenilin homodimer (PSEN1 or PSEN2), nicastrin (NCSTN), APH1 (APH1A or APH1B) and PEN2. Such minimal complex is sufficient for secretase activity, although other components may exist. Interacts with PSEN1 and PSEN2.

Its subcellular location is the membrane. In terms of biological role, probable subunit of the gamma-secretase complex, an endoprotease complex that catalyzes the intramembrane cleavage of integral proteins such as Notch receptors and APP (amyloid-beta precursor protein). It probably represents a stabilizing cofactor for the presenilin homodimer that promotes the formation of a stable complex. Probably present in a minority of gamma-secretase complexes compared to APH1A. This is Gamma-secretase subunit APH-1B (APH1B) from Pongo abelii (Sumatran orangutan).